An 894-amino-acid polypeptide reads, in one-letter code: MNPGFDLSRRNPQEDFELIQRIGSGTYGDVYKARNVNTGELAAIKVIKLEPGEDFAVVQQEIIMMKDCKHPNIVAYFGSYLRRDKLWICMEFCGGGSLQDIYHVTGPLSELQIAYVSRETLQGLYYLHSKGKMHRDIKGANILLTDNGHVKLADFGVSAQITATIAKRKSFIGTPYWMAPEVAAVERKGGYNQLCDLWAVGITAIELAELQPPMFDLHPMRALFLMTKSNFQPPKLKDKLKWSNSFHHFVKMALTKNPKKRPNAEKLLQHPFVTQPLTRSLAIELLDKVNNPDHSTYHDFDDDDPEPLVAVPHRIPSTSRNVREEKTRSEINFGQVKFDPPLRKETEPHHELPDSDGFFDSSEEIYYTARSNLDLQLEYGQGHQSHCFLGGNKSLLKSVEEELHQRGHVAHLEDDEGDDDDSKHSTMKAKVPPPLPPKPKSIFIPQDTHSAEDGNQGTIKRCPSSGSPAKPSHVPPRPPPPRLPPQKPAVLGNGVNSFQLNGERDGSLYQQQSEQRGTNLSRKEKKDVPKPISNGLPPTPKVHMGACFSKVFNGCPLKIHCATSWINPDTRDQYLIFGAEEGIYTLNLNELHETSMEQLFPRRCTWLYVMNNCLLSVSGKASQLYSHNLPGLFDYARQMQKLPVAIPAHKLPDRILPRKFAVSAKIPETKWCQKCCVVRNPYTGHKYLCGALQTSIVLLEWVEPMQKFMLIKHIEFPMPCPLRMFEMLVVPEQEYPLVCVGVSRGRDFNQVVRFETVNPNSTSSWFTESDAPQTSVTHVTQLERDTILVCLDCCIKIVNLQGRLKSSRKLSSELTFDFQIESIVCLQDSVLAFWKHGMQGRSFRSNEVTQEISDNTRIFRLLGSDRVVVLESRPTDNPTANSNLYILAGHENSY.

Methionine 1 carries the N-acetylmethionine modification. Residues 16–273 (FELIQRIGSG…AEKLLQHPFV (258 aa)) enclose the Protein kinase domain. ATP is bound by residues 22-30 (IGSGTYGDV) and lysine 45. Catalysis depends on aspartate 136, which acts as the Proton acceptor. Residue serine 329 is modified to Phosphoserine. Residues 339 to 358 (DPPLRKETEPHHELPDSDGF) form a disordered region. The span at 340–353 (PPLRKETEPHHELP) shows a compositional bias: basic and acidic residues. The residue at position 398 (serine 398) is a Phosphoserine. The segment at 408-537 (HVAHLEDDEG…VPKPISNGLP (130 aa)) is disordered. A compositionally biased stretch (pro residues) spans 473–487 (HVPPRPPPPRLPPQK). The span at 508 to 520 (LYQQQSEQRGTNL) shows a compositional bias: polar residues. The CNH domain maps to 556 to 867 (PLKIHCATSW…IFRLLGSDRV (312 aa)).

The protein belongs to the protein kinase superfamily. STE Ser/Thr protein kinase family. STE20 subfamily. In terms of assembly, interacts with SH3GL2. Interaction appears to regulate MAP4K3-mediated JNK activation. It depends on Mg(2+) as a cofactor.

It carries out the reaction L-seryl-[protein] + ATP = O-phospho-L-seryl-[protein] + ADP + H(+). It catalyses the reaction L-threonyl-[protein] + ATP = O-phospho-L-threonyl-[protein] + ADP + H(+). Functionally, serine/threonine kinase that plays a role in the response to environmental stress. Appears to act upstream of the JUN N-terminal pathway. Activator of the Hippo signaling pathway which plays a pivotal role in organ size control and tumor suppression by restricting proliferation and promoting apoptosis. MAP4Ks act in parallel to and are partially redundant with STK3/MST2 and STK4/MST2 in the phosphorylation and activation of LATS1/2, and establish MAP4Ks as components of the expanded Hippo pathway. This Mus musculus (Mouse) protein is Mitogen-activated protein kinase kinase kinase kinase 3 (Map4k3).